A 509-amino-acid polypeptide reads, in one-letter code: Probable malate:quinone oxidoreductase (509 aa).

The disordered stretch occupies residues 490–509 (LGLNEKEPVSGASEKELVYS). Over residues 493–509 (NEKEPVSGASEKELVYS) the composition is skewed to basic and acidic residues.

Belongs to the MQO family. FAD is required as a cofactor.

The enzyme catalyses (S)-malate + a quinone = a quinol + oxaloacetate. The protein operates within carbohydrate metabolism; tricarboxylic acid cycle; oxaloacetate from (S)-malate (quinone route): step 1/1. In Geobacillus sp. (strain WCH70), this protein is Probable malate:quinone oxidoreductase.